Here is a 219-residue protein sequence, read N- to C-terminus: Protein-L-isoaspartate O-methyltransferase (219 aa).

Residue S65 is part of the active site.

The protein belongs to the methyltransferase superfamily. L-isoaspartyl/D-aspartyl protein methyltransferase family. Monomer.

Its subcellular location is the cytoplasm. The enzyme catalyses [protein]-L-isoaspartate + S-adenosyl-L-methionine = [protein]-L-isoaspartate alpha-methyl ester + S-adenosyl-L-homocysteine. In terms of biological role, catalyzes the methyl esterification of L-isoaspartyl residues in peptides and proteins that result from spontaneous decomposition of normal L-aspartyl and L-asparaginyl residues. It plays a role in the repair and/or degradation of damaged proteins. This is Protein-L-isoaspartate O-methyltransferase (pcm) from Pyrococcus furiosus (strain ATCC 43587 / DSM 3638 / JCM 8422 / Vc1).